Reading from the N-terminus, the 465-residue chain is Transcriptional protein swt1 (465 aa).

The 121-residue stretch at 70 to 190 (GLFVLDTNFL…LLSDDKNLSI (121 aa)) folds into the PINc domain.

The protein belongs to the SWT1 family.

It is found in the cytoplasm. The protein localises to the nucleus. Involved in transcription. The polypeptide is Transcriptional protein swt1 (Schizosaccharomyces pombe (strain 972 / ATCC 24843) (Fission yeast)).